The primary structure comprises 616 residues: Hemagglutinin-neuraminidase (616 aa).

Over 1–26 (MDRAVSQVALENDEREAKNTWRLVFR) the chain is Intravirion. Residues 27–47 (IAILLSTVVTLAISAAALAYS) form a helical membrane-spanning segment. Over 48–616 (MEASTPSDLV…ELESYAASWP (569 aa)) the chain is Virion surface. N-linked (GlcNAc...) asparagine; by host glycosylation is present at asparagine 119. The tract at residues 124-152 (GAPIHDPDYIGGIGKELIVDDASDVTSYY) is important for interaction with fusion/F protein. Cystine bridges form between cysteine 172-cysteine 196, cysteine 186-cysteine 247, and cysteine 238-cysteine 251. Positions 234-239 (NRKSCS) are involved in neuraminidase activity. N-linked (GlcNAc...) asparagine; by host glycosylation is found at asparagine 341 and asparagine 433. Intrachain disulfides connect cysteine 344–cysteine 461 and cysteine 455–cysteine 465. 3 N-linked (GlcNAc...) asparagine; by host glycosylation sites follow: asparagine 481, asparagine 538, and asparagine 600. An intrachain disulfide couples cysteine 531 to cysteine 542.

Belongs to the paramyxoviruses hemagglutinin-neuraminidase family. In terms of assembly, homotetramer; composed of disulfide-linked homodimers. Interacts with F protein trimer. Interacts with host CG-1B; this interaction inhibits viral adsorption and replication rather than internalization.

It localises to the virion membrane. It is found in the host cell membrane. It carries out the reaction Hydrolysis of alpha-(2-&gt;3)-, alpha-(2-&gt;6)-, alpha-(2-&gt;8)- glycosidic linkages of terminal sialic acid residues in oligosaccharides, glycoproteins, glycolipids, colominic acid and synthetic substrates.. Functionally, mediates the viral entry into the host cell together with fusion/F protein. Attaches the virus to sialic acid-containing cell receptors and thereby initiates infection. Binding of HN protein to the receptor induces a conformational change that allows the F protein to trigger virion/cell membranes fusion. Neuraminidase activity ensures the efficient spread of the virus by dissociating the mature virions from the neuraminic acid containing glycoproteins. The protein is Hemagglutinin-neuraminidase (HN) of Newcastle disease virus (strain Queensland/66) (NDV).